The primary structure comprises 416 residues: Counting factor 60 (416 aa).

The N-terminal stretch at 1–22 (MIKKSALITLFLVSLILGVSLS) is a signal peptide. N-linked (GlcNAc...) asparagine glycosylation is found at N110, N218, N231, N318, and N411.

Belongs to the histidine acid phosphatase family. Component of the counting factor (CF) complex, which includes cf60, cf50, cf45-1 and ctnA.

It is found in the secreted. In terms of biological role, cell-counting factor that limits the maximum size of the multicellular structure. Does not possess acid phosphatase activity. Cells with decreased levels of this protein form large groups while cells overexpressing this protein form small groups. This is Counting factor 60 (cf60) from Dictyostelium discoideum (Social amoeba).